A 267-amino-acid chain; its full sequence is 2-keto-3-deoxy-L-rhamnonate aldolase (267 aa).

The active-site Proton acceptor is H49. Substrate is bound at residue Q151. E153 serves as a coordination point for Mg(2+). Residues A178 and D179 each coordinate substrate. A Mg(2+)-binding site is contributed by D179.

This sequence belongs to the HpcH/HpaI aldolase family. KDR aldolase subfamily. As to quaternary structure, homohexamer. Mg(2+) is required as a cofactor.

It catalyses the reaction 2-dehydro-3-deoxy-L-rhamnonate = (S)-lactaldehyde + pyruvate. Catalyzes the reversible retro-aldol cleavage of 2-keto-3-deoxy-L-rhamnonate (KDR) to pyruvate and lactaldehyde. The chain is 2-keto-3-deoxy-L-rhamnonate aldolase from Shigella boydii serotype 4 (strain Sb227).